The following is an 880-amino-acid chain: MKQLTGAQIRQMFLDFFQEKGHAVEPSASLVPHEDPSLLWINSGVATLKKYFDGRVIPQNPRITNAQKSIRTNDIENVGKTARHHTFFEMLGNFSIGDYFKEEAITWAWEFLTSDKWIGFDKELLSVTIHPEDEEAFTIWNEKMGVPKERIIRLEENFWDIGEGPSGPNTEIFYDRGESYGNDFSDPELYPGGENERYLEVWNLVFSQFNHNPDGSYTPLPKKNIDTGMGLERMTSIVQDVPTNFDTDLFMPMIGATESISGEKYRNGDLEKDMAFKVIADHIRTVTFAVGDGALPSNEGRGYVLRRLLRRAVRYSKKLNINRPFMFELVPVVGEVMKDFYPEVLEKKDFIAKVVKNEEERFHETLHDGESILAEVIAKAKEEKTTVISGVDAFRLYDTYGFPIELTEEYAEEAGMTVDQAGFENEMEKQRERARAARQDVDSMQVQGGVLGEVKVASEFVGYGTVATESNVVALVKNGEYTDSLQAGEEGQLMLDVTPFYAESGGQIADRGYLLADGVKVVVKDVQKAPNGQNLHKVVVEEGTLTKDAAVKAVIDTKNRSSVVKNHTATHLLHQALKDILGTHVNQAGSLVTSERLRFDFSHFGQVQADELEKIERIVNEKIWESIDVAISQKAIEEAKEMGAMALFGEKYGDVVRVVQVGDYSLELCGGCHVDNTASIGIFKIVAESGIGAGTRRIEAVTGKSAYELMNDQVGLLKEAAGKMKTNPKDILTRVDGLFTEVKQLQKENESLAAKLSNIEAGNLTDSVMTVDGVNVLAAKVNVADMNNLRTMMDDLKNKLESAVVVLASVNDDKVNILAGVTKDLISQGYHAGKLVKEVASRCGGGGGGRPDMAQAGGKNPAQVEEALAFVQEYVKSVSK.

Residues His-567, His-571, Cys-669, and His-673 each coordinate Zn(2+).

Belongs to the class-II aminoacyl-tRNA synthetase family. Requires Zn(2+) as cofactor.

The protein resides in the cytoplasm. The enzyme catalyses tRNA(Ala) + L-alanine + ATP = L-alanyl-tRNA(Ala) + AMP + diphosphate. Catalyzes the attachment of alanine to tRNA(Ala) in a two-step reaction: alanine is first activated by ATP to form Ala-AMP and then transferred to the acceptor end of tRNA(Ala). Also edits incorrectly charged Ser-tRNA(Ala) and Gly-tRNA(Ala) via its editing domain. This is Alanine--tRNA ligase from Bacillus mycoides (strain KBAB4) (Bacillus weihenstephanensis).